A 127-amino-acid chain; its full sequence is Glycine cleavage system H protein 1 (127 aa).

The Lipoyl-binding domain maps to 20 to 101 (SVTVGITAYA…MGEGWFFRFI (82 aa)). The residue at position 60 (lysine 60) is an N6-lipoyllysine.

The protein belongs to the GcvH family. The glycine cleavage system is composed of four proteins: P, T, L and H. The cofactor is (R)-lipoate.

In terms of biological role, the glycine cleavage system catalyzes the degradation of glycine. The H protein shuttles the methylamine group of glycine from the P protein to the T protein. The sequence is that of Glycine cleavage system H protein 1 from Pseudomonas putida (strain ATCC 47054 / DSM 6125 / CFBP 8728 / NCIMB 11950 / KT2440).